The chain runs to 523 residues: MGDPSKQDILAIFKRLRSVPTNKVCFDCGAKNPSWASISYGVFLCIDCSGSHRSLGVHLSFIRSTELDSNWSWFQLRCMQVGGNSNASSFFHQHGCATKDTNAKYNSRAAQLYREKIKTLATQATRRHGTDLWLDSCAAPPVSPPPKEEDFFASHASLEVSGAMQASAQPESASSTPWGLETTPEKHEGGPGQGPSVEGLNTPGKAAPEVSSIIKKKPNQAKKGLGAKKGSLGAQKLTNTSFTEIEKQAQAVDKRKEQEDLARGAPKEESIVSSLRLAYKDLEISRKKDERLNLSGQKKVEAERLGMGFGSCRSGISHSVTSDMQTIEQESPTLAKPRRKYQEDPEDSYFSSSSKWSEQSSRYFDDPMELRSSSFSSWDDGADSYWKKDSSRDPEPAMRSTGSSDRPSARRKPEYEPIGSTDEAQKKFGNVKAISSDMYFGIQAQTDFETRARLERLSTSSSISSADLFDEQRKQTAGNYNLSNVLPNAPDMAQFKQGVRSVAGKLSVFANGVMTSIQDRYGS.

An Arf-GAP domain is found at 10-126 (LAIFKRLRSV…IKTLATQATR (117 aa)). The C4-type zinc finger occupies 25–48 (CFDCGAKNPSWASISYGVFLCIDC). A disordered region spans residues 162-206 (GAMQASAQPESASSTPWGLETTPEKHEGGPGQGPSVEGLNTPGKA). Over residues 164-177 (MQASAQPESASSTP) the composition is skewed to polar residues. Phosphoserine is present on residues serine 231 and serine 241. Residues 248-269 (QAQAVDKRKEQEDLARGAPKEE) are disordered. A phosphoserine mark is found at serine 270, serine 274, and serine 331. The tract at residues 308–424 (GFGSCRSGIS…YEPIGSTDEA (117 aa)) is disordered. Residues 314–332 (SGISHSVTSDMQTIEQESP) are compositionally biased toward polar residues. A compositionally biased stretch (low complexity) spans 348–361 (SYFSSSSKWSEQSS). Phosphoserine is present on serine 377. The segment covering 385–396 (YWKKDSSRDPEP) has biased composition (basic and acidic residues). A phosphoserine mark is found at serine 435, serine 458, serine 460, serine 462, serine 464, and serine 465.

It is found in the cytoplasm. Its subcellular location is the golgi apparatus membrane. Its activity is regulated as follows. GAP activity stimulated by phosphatidylinositol 4,5-bisphosphate (PIP2). Its function is as follows. GTPase-activating protein (GAP) for ADP ribosylation factor 1 (ARF1). Hydrolysis of ARF1-bound GTP may lead to dissociation of coatomer from Golgi-derived membranes to allow fusion with target membranes. The sequence is that of ADP-ribosylation factor GTPase-activating protein 3 (Arfgap3) from Mus musculus (Mouse).